Here is a 348-residue protein sequence, read N- to C-terminus: Hereditary hemochromatosis protein (348 aa).

A signal peptide spans 1-22 (MGPRARPALLLLMLLQTAVLQG). The alpha-1 stretch occupies residues 23 to 114 (RLLRSHSLHY…IMENHNHSKE (92 aa)). At 23 to 306 (RLLRSHSLHY…WEPSPSGTLV (284 aa)) the chain is on the extracellular side. 3 N-linked (GlcNAc...) asparagine glycosylation sites follow: asparagine 110, asparagine 130, and asparagine 234. Positions 115–205 (SHTLQVILGC…ELGRGVLDQQ (91 aa)) are alpha-2. 2 cysteine pairs are disulfide-bonded: cysteine 124/cysteine 187 and cysteine 225/cysteine 282. The segment at 206 to 297 (VPPLVKVTHH…GLDQPLIVIW (92 aa)) is alpha-3. The 92-residue stretch at 207–298 (PPLVKVTHHV…LDQPLIVIWE (92 aa)) folds into the Ig-like C1-type domain. Residues 298–306 (EPSPSGTLV) form a connecting peptide region. The helical transmembrane segment at 307–330 (IGVISGIAVFVVILFIGILFIILR) threads the bilayer. The Cytoplasmic portion of the chain corresponds to 331–348 (KRQGSRGAMGHYVLAERE).

Belongs to the MHC class I family. As to quaternary structure, binds TFR through the extracellular domain in a pH-dependent manner. In terms of tissue distribution, expressed in all tissues tested except brain.

Its subcellular location is the cell membrane. Functionally, binds to transferrin receptor (TFR) and reduces its affinity for iron-loaded transferrin. The chain is Hereditary hemochromatosis protein (HFE) from Homo sapiens (Human).